Consider the following 195-residue polypeptide: Neurturin (195 aa).

The first 19 residues, 1 to 19 (MRRWKAAALVSLICSSLLS), serve as a signal peptide directing secretion. A propeptide spanning residues 20 to 95 (VWMCQEGLLL…RAGPRRRRAR (76 aa)) is cleaved from the precursor. Disulfide bonds link Cys101–Cys163, Cys128–Cys192, and Cys132–Cys194. Heparan sulfate group is bound by residues Arg147, Arg156, and Arg158.

The protein belongs to the TGF-beta family. GDNF subfamily. As to quaternary structure, homodimer; disulfide-linked. Interacts with GFRA2 coreceptor and RET: forms a 2:2:2 ternary complex composed of NRTN ligand, GFRA2 and RET receptor. Also forms a 4:4:4 tetrameric complex composed of 4 copies of NRTN ligand, GFRA2 and RET receptor, which prevents endocytosis of RET. Widespread distribution.

The protein resides in the secreted. In terms of biological role, growth factor that supports the survival of sympathetic neurons in culture. May regulate the development and maintenance of the CNS. Involved in the development of the neural crest. Might control the size of non-neuronal cell population such as haemopoietic cells. Acts by binding to its coreceptor, GFRA2, leading to autophosphorylation and activation of the RET receptor. Heparan sulfate-binding is required for signaling. The sequence is that of Neurturin (Nrtn) from Mus musculus (Mouse).